The sequence spans 500 residues: tRNA modification GTPase MnmE (500 aa).

Positions 24, 120, and 159 each coordinate (6S)-5-formyl-5,6,7,8-tetrahydrofolate. One can recognise a TrmE-type G domain in the interval 256 to 420; the sequence is GIPVAIIGET…LEKKLVQAAA (165 aa). K(+) is bound at residue N266. GTP-binding positions include 266-271, 285-291, and 310-313; these read NAGKST, SDIHGTT, and DTAG. Position 270 (S270) interacts with Mg(2+). K(+)-binding residues include S285, I287, and T290. Position 291 (T291) interacts with Mg(2+). K500 provides a ligand contact to (6S)-5-formyl-5,6,7,8-tetrahydrofolate.

Belongs to the TRAFAC class TrmE-Era-EngA-EngB-Septin-like GTPase superfamily. TrmE GTPase family. As to quaternary structure, homodimer. Heterotetramer of two MnmE and two MnmG subunits. K(+) serves as cofactor.

Its subcellular location is the cytoplasm. Functionally, exhibits a very high intrinsic GTPase hydrolysis rate. Involved in the addition of a carboxymethylaminomethyl (cmnm) group at the wobble position (U34) of certain tRNAs, forming tRNA-cmnm(5)s(2)U34. This is tRNA modification GTPase MnmE from Phocaeicola vulgatus (strain ATCC 8482 / DSM 1447 / JCM 5826 / CCUG 4940 / NBRC 14291 / NCTC 11154) (Bacteroides vulgatus).